A 232-amino-acid polypeptide reads, in one-letter code: Orotidine 5'-phosphate decarboxylase (232 aa).

Substrate is bound by residues aspartate 11, lysine 33, 60–69, threonine 119, arginine 180, glutamine 189, glycine 209, and arginine 210; that span reads DLKLYDIPNT. Lysine 62 acts as the Proton donor in catalysis.

It belongs to the OMP decarboxylase family. Type 1 subfamily. As to quaternary structure, homodimer.

The catalysed reaction is orotidine 5'-phosphate + H(+) = UMP + CO2. The protein operates within pyrimidine metabolism; UMP biosynthesis via de novo pathway; UMP from orotate: step 2/2. In terms of biological role, catalyzes the decarboxylation of orotidine 5'-monophosphate (OMP) to uridine 5'-monophosphate (UMP). This Wigglesworthia glossinidia brevipalpis protein is Orotidine 5'-phosphate decarboxylase.